The sequence spans 384 residues: Probable inactive patatin-like protein 9 (384 aa).

In terms of domain architecture, PNPLA spans 33 to 234 (LSIDGGGTTG…VMNNPTAAAV (202 aa)). Residues 37-42 (GGGTTG) carry the GXGXXG motif. Asp-221 functions as the Proton acceptor in the catalytic mechanism. Residues 221-223 (DGG) carry the DGA/G motif. The disordered stretch occupies residues 363 to 384 (GKSSLPPSPCKESAVNPLADGR).

This sequence belongs to the patatin family. In terms of tissue distribution, highly expressed in roots and at lower levels in flowers and siliques.

The protein is Probable inactive patatin-like protein 9 (PLP9) of Arabidopsis thaliana (Mouse-ear cress).